We begin with the raw amino-acid sequence, 476 residues long: MKVLHVCSEFYPLLKTGGLADVVGALPAAQKAIGDDARILIPAYPAIWRGIPDTVVVAEFDNFAGHVTLRYGIYNGVGVYLIDAPHLYAREGNPYHDQWYNDYADNYKRFGLLGWVASELALGLDFWWQAEVVHAHDWHAGLASAYLAAKGHPAKSVFTIHNLAYQGKFAARHLIELGLPVDMFNVNGLELYGEISYLKAGLFYSDMVTTVSPTYAKEITTTEFGYGLQGLLSTLDQQNRLAGVLNGVDDSIWHPNNDPYIHHHYKLKSMSGKAKNKALLQERFNLPQNPNVPVFVMITRLTEQKGVDLLLQCADEIVNQGGQLMILGSGAPHLQDWVNWLASQHPDNVGVWIGYDEPLSHLMVAGGDVILVPSRFEPCGLTQLYGLKYGTLPLVRKTGGLADTVVDSSAENIKARRATGFVFNNAEPEALRHCIQRVFSLWSKQRTWFTVRTVAMEQDFGWRVAAHRYHELYNKI.

K15 is an ADP-alpha-D-glucose binding site.

The protein belongs to the glycosyltransferase 1 family. Bacterial/plant glycogen synthase subfamily.

The enzyme catalyses [(1-&gt;4)-alpha-D-glucosyl](n) + ADP-alpha-D-glucose = [(1-&gt;4)-alpha-D-glucosyl](n+1) + ADP + H(+). It functions in the pathway glycan biosynthesis; glycogen biosynthesis. Synthesizes alpha-1,4-glucan chains using ADP-glucose. The sequence is that of Glycogen synthase from Actinobacillus succinogenes (strain ATCC 55618 / DSM 22257 / CCUG 43843 / 130Z).